We begin with the raw amino-acid sequence, 168 residues long: Photosystem I assembly protein Ycf3 (168 aa).

TPR repeat units lie at residues 35 to 68 (AFTYYRDGMSAQSDGNYAEALQNYYEATRLEIDP), 72 to 105 (SYILYNIGLIHTSNGEHTKALEYYFRALERNPFL), and 120 to 153 (GEQAIRQGDSEIAEAWSDQAAEYWKQAIALTPGN).

It belongs to the Ycf3 family.

It is found in the plastid. The protein localises to the chloroplast thylakoid membrane. Its function is as follows. Essential for the assembly of the photosystem I (PSI) complex. May act as a chaperone-like factor to guide the assembly of the PSI subunits. The protein is Photosystem I assembly protein Ycf3 of Chloranthus spicatus (Chulantree).